The sequence spans 136 residues: Cytokine-like protein 1 (136 aa).

A signal peptide spans 1 to 22; that stretch reads MRTPGPLPVLLLLLAGAPAARP.

Specifically expressed in CD34+ hematopoietic cells.

It is found in the secreted. The chain is Cytokine-like protein 1 (CYTL1) from Homo sapiens (Human).